Here is a 572-residue protein sequence, read N- to C-terminus: Cytochrome P450 monooxygenase xilC (572 aa).

Position 515 (Cys-515) interacts with heme.

Belongs to the cytochrome P450 family. Heme serves as cofactor.

Its pathway is secondary metabolite biosynthesis. Its function is as follows. Cytochrome P450 monooxygenase; part of the gene cluster that mediates the biosynthesis of the 6-methyl-2-pyrone derivative xylariolide D. XilC hydroxylates the 5-alkyl-6-methyl-2-pyrone backbone called prexylariolide D, produced by the highly reducing polyketide synthase xilA, on its side chain to form xylariolide D. This chain is Cytochrome P450 monooxygenase xilC, found in Penicillium crustosum (Blue mold fungus).